The following is a 460-amino-acid chain: Glycogen synthase (460 aa).

Position 15 (K15) interacts with ADP-alpha-D-glucose.

Belongs to the glycosyltransferase 1 family. Bacterial/plant glycogen synthase subfamily.

The catalysed reaction is [(1-&gt;4)-alpha-D-glucosyl](n) + ADP-alpha-D-glucose = [(1-&gt;4)-alpha-D-glucosyl](n+1) + ADP + H(+). Its pathway is glycan biosynthesis; glycogen biosynthesis. Functionally, synthesizes alpha-1,4-glucan chains using ADP-glucose. This is Glycogen synthase from Trichodesmium erythraeum (strain IMS101).